The primary structure comprises 335 residues: Biotin synthase (335 aa).

A Radical SAM core domain is found at 43–269 (YFGKKVKLNM…INPTKEIRIA (227 aa)). 3 residues coordinate [4Fe-4S] cluster: Cys-61, Cys-65, and Cys-68. Residues Cys-104, Cys-137, Cys-197, and Arg-267 each coordinate [2Fe-2S] cluster.

This sequence belongs to the radical SAM superfamily. Biotin synthase family. Homodimer. It depends on [4Fe-4S] cluster as a cofactor. [2Fe-2S] cluster is required as a cofactor.

The catalysed reaction is (4R,5S)-dethiobiotin + (sulfur carrier)-SH + 2 reduced [2Fe-2S]-[ferredoxin] + 2 S-adenosyl-L-methionine = (sulfur carrier)-H + biotin + 2 5'-deoxyadenosine + 2 L-methionine + 2 oxidized [2Fe-2S]-[ferredoxin]. The protein operates within cofactor biosynthesis; biotin biosynthesis; biotin from 7,8-diaminononanoate: step 2/2. Its function is as follows. Catalyzes the conversion of dethiobiotin (DTB) to biotin by the insertion of a sulfur atom into dethiobiotin via a radical-based mechanism. This is Biotin synthase from Staphylococcus aureus (strain USA300).